The following is a 136-amino-acid chain: Histone H3.3C-like (136 aa).

At Arg-3 the chain carries Asymmetric dimethylarginine; by PRMT6; alternate. Citrulline; alternate is present on Arg-3. A Phosphothreonine; by HASPIN modification is found at Thr-4. Lys-5 is modified (allysine; alternate). Lys-5 is modified (N6,N6,N6-trimethyllysine; alternate). An N6,N6-dimethyllysine; alternate modification is found at Lys-5. The residue at position 5 (Lys-5) is an N6-(2-hydroxyisobutyryl)lysine; alternate. Lys-5 carries the N6-(beta-hydroxybutyryl)lysine; alternate modification. N6-acetyllysine; alternate is present on Lys-5. An N6-methyllysine; alternate modification is found at Lys-5. Thr-7 is modified (phosphothreonine; by PKC). Position 10 is an N6,N6,N6-trimethyllysine; alternate (Lys-10). Lys-10 bears the N6,N6-dimethyllysine; alternate mark. Lys-10 carries the N6-(2-hydroxyisobutyryl)lysine; alternate modification. Lys-10 is subject to N6-acetyllysine; alternate. Lys-10 bears the N6-methyllysine; alternate mark. Ser-11 is subject to ADP-ribosylserine; alternate. The residue at position 11 (Ser-11) is a Phosphoserine; alternate; by AURKB, AURKC, RPS6KA3, RPS6KA4 and RPS6KA5. Residue Thr-12 is modified to Phosphothreonine; by PKC. Lys-15 carries the N6-(2-hydroxyisobutyryl)lysine; alternate modification. Position 15 is an N6-(beta-hydroxybutyryl)lysine; alternate (Lys-15). N6-acetyllysine; alternate is present on Lys-15. Lys-15 carries the post-translational modification N6-glutaryllysine; alternate. Lys-15 is subject to N6-succinyllysine; alternate. Arg-18 carries the post-translational modification Citrulline; alternate. Arg-18 bears the Asymmetric dimethylarginine; by CARM1; alternate mark. An N6-(2-hydroxyisobutyryl)lysine; alternate mark is found at Lys-19 and Lys-28. The residue at position 19 (Lys-19) is an N6-(beta-hydroxybutyryl)lysine; alternate. An N6-acetyllysine; alternate mark is found at Lys-19 and Lys-28. Residues Lys-19 and Lys-28 each carry the N6-methyllysine; alternate modification. N6-glutaryllysine; alternate is present on residues Lys-19 and Lys-28. Lys-19 carries the N6-butyryllysine; alternate modification. At Lys-28 the chain carries N6,N6,N6-trimethyllysine; alternate. An N6,N6-dimethyllysine; alternate modification is found at Lys-28. At Ser-29 the chain carries ADP-ribosylserine; alternate. Position 29 is a phosphoserine; alternate; by AURKB, AURKC and RPS6KA5 (Ser-29). The residue at position 32 (Ser-32) is a Phosphoserine. Lys-38 bears the N6-methyllysine mark. Phosphotyrosine is present on Tyr-42. Lys-57 is subject to N6,N6,N6-trimethyllysine; alternate. N6-(2-hydroxyisobutyryl)lysine; alternate is present on Lys-57. Position 57 is an N6-(beta-hydroxybutyryl)lysine; alternate (Lys-57). Lys-57 bears the N6-acetyllysine; alternate mark. Position 57 is an N6-glutaryllysine; alternate (Lys-57). N6-succinyllysine; alternate is present on Lys-57. N6-methyllysine; by EHMT2; alternate is present on Lys-57. Ser-58 carries the post-translational modification Phosphoserine. 2 positions are modified to N6-(2-hydroxyisobutyryl)lysine; alternate: Lys-65 and Lys-80. N6-methyllysine; alternate occurs at positions 65 and 80. N6,N6,N6-trimethyllysine; alternate is present on Lys-80. At Lys-80 the chain carries N6,N6-dimethyllysine; alternate. Lys-80 carries the post-translational modification N6-acetyllysine; alternate. An N6-glutaryllysine; alternate modification is found at Lys-80. Lys-80 is modified (N6-succinyllysine; alternate). At Thr-81 the chain carries Phosphothreonine. Position 87 is a phosphoserine (Ser-87).

Belongs to the histone H3 family. The nucleosome is a histone octamer containing two molecules each of H2A, H2B, H3 and H4 assembled in one H3-H4 heterotetramer and two H2A-H2B heterodimers. The octamer wraps approximately 147 bp of DNA. Acetylation is generally linked to gene activation. Acetylation on Lys-19 favors methylation at Arg-18. In terms of processing, citrullination at Arg-18 by PADI4 impairs methylation and represses transcription. Post-translationally, asymmetric dimethylation at Arg-18 (H3R17me2a) by CARM1 is linked to gene activation. Asymmetric dimethylation at Arg-3 (H3R2me2a) by PRMT6 is linked to gene repression and is mutually exclusive with H3 Lys-5 methylation (H3K4me2 and H3K4me3). H3R2me2a is present at the 3' of genes regardless of their transcription state and is enriched on inactive promoters, while it is absent on active promoters. Methylation at Lys-5 (H3K4me) and Lys-80 (H3K79me) are linked to gene activation. Methylation at Lys-5 (H3K4me) facilitates subsequent acetylation of H3 and H4. Methylation at Lys-80 (H3K79me) is associated with DNA double-strand break (DSB) responses and is a specific target for TP53BP1. Methylation at Lys-10 (H3K9me) and Lys-28 (H3K27me) are linked to gene repression. Methylation at Lys-10 (H3K9me) is a specific target for HP1 proteins (CBX1, CBX3 and CBX5) and prevents subsequent phosphorylation at Ser-11 (H3S10ph) and acetylation of H3 and H4. Methylation at Lys-5 (H3K4me) and Lys-80 (H3K79me) require preliminary monoubiquitination of H2B at 'Lys-120'. Methylation at Lys-10 (H3K9me) and Lys-28 (H3K27me) are enriched in inactive X chromosome chromatin. Monomethylation at Lys-57 (H3K56me1) by EHMT2/G9A in G1 phase promotes interaction with PCNA and is required for DNA replication. In terms of processing, phosphorylated at Thr-4 (H3T3ph) by HASPIN during prophase and dephosphorylated during anaphase. Phosphorylation at Ser-11 (H3S10ph) by AURKB is crucial for chromosome condensation and cell-cycle progression during mitosis and meiosis. In addition phosphorylation at Ser-11 (H3S10ph) by RPS6KA4 and RPS6KA5 is important during interphase because it enables the transcription of genes following external stimulation, like mitogens, stress, growth factors or UV irradiation and result in the activation of genes, such as c-fos and c-jun. Phosphorylation at Ser-11 (H3S10ph), which is linked to gene activation, prevents methylation at Lys-10 (H3K9me) but facilitates acetylation of H3 and H4. Phosphorylation at Ser-11 (H3S10ph) by AURKB mediates the dissociation of HP1 proteins (CBX1, CBX3 and CBX5) from heterochromatin. Phosphorylation at Ser-11 (H3S10ph) is also an essential regulatory mechanism for neoplastic cell transformation. Phosphorylated at Ser-29 (H3S28ph) by MAP3K20 isoform 1, RPS6KA5 or AURKB during mitosis or upon ultraviolet B irradiation. Phosphorylation at Thr-7 (H3T6ph) by PRKCB is a specific tag for epigenetic transcriptional activation that prevents demethylation of Lys-5 (H3K4me) by LSD1/KDM1A. At centromeres, specifically phosphorylated at Thr-12 (H3T11ph) from prophase to early anaphase, by DAPK3 and PKN1. Phosphorylation at Thr-12 (H3T11ph) by PKN1 or isoform M2 of PKM (PKM2) is a specific tag for epigenetic transcriptional activation that promotes demethylation of Lys-10 (H3K9me) by KDM4C/JMJD2C. Phosphorylation at Tyr-42 (H3Y41ph) by JAK2 promotes exclusion of CBX5 (HP1 alpha) from chromatin. Post-translationally, lysine deamination at Lys-5 (H3K4all) to form allysine is mediated by LOXL2. Allysine formation by LOXL2 only takes place on H3K4me3 and results in gene repression. Butyrylation of histones marks active promoters and competes with histone acetylation. It is present during late spermatogenesis. In terms of processing, succinylation at Lys-80 (H3K79succ) by KAT2A takes place with a maximum frequency around the transcription start sites of genes. It gives a specific tag for epigenetic transcription activation. Post-translationally, serine ADP-ribosylation constitutes the primary form of ADP-ribosylation of proteins in response to DNA damage. Serine ADP-ribosylation at Ser-11 (H3S10ADPr) is mutually exclusive with phosphorylation at Ser-11 (H3S10ph) and impairs acetylation at Lys-10 (H3K9ac).

It localises to the nucleus. It is found in the chromosome. Its function is as follows. Core component of nucleosome. Nucleosomes wrap and compact DNA into chromatin, limiting DNA accessibility to the cellular machineries which require DNA as a template. Histones thereby play a central role in transcription regulation, DNA repair, DNA replication and chromosomal stability. DNA accessibility is regulated via a complex set of post-translational modifications of histones, also called histone code, and nucleosome remodeling. In Bos taurus (Bovine), this protein is Histone H3.3C-like.